The following is a 1133-amino-acid chain: Error-prone DNA polymerase (1133 aa).

It belongs to the DNA polymerase type-C family. DnaE2 subfamily.

Its subcellular location is the cytoplasm. The enzyme catalyses DNA(n) + a 2'-deoxyribonucleoside 5'-triphosphate = DNA(n+1) + diphosphate. Functionally, DNA polymerase involved in damage-induced mutagenesis and translesion synthesis (TLS). It is not the major replicative DNA polymerase. This chain is Error-prone DNA polymerase, found in Anaeromyxobacter sp. (strain K).